The sequence spans 906 residues: ATP-dependent DNA helicase PIF1 (906 aa).

Disordered regions lie at residues 77-146 (DSEI…SSTF) and 229-297 (LEGS…PFKV). Positions 78–87 (SEIKESDDLS) are enriched in basic and acidic residues. The segment covering 88-119 (KGQSHVYNGSPVTKNSILQIEKQQIQKSPRPT) has biased composition (polar residues). The segment covering 120 to 132 (ETNKRMQIRKDPD) has biased composition (basic and acidic residues). A compositionally biased stretch (polar residues) spans 234-261 (NKVQADNASPFRITSSFSSPSQIQNQGV). Residues 273–291 (QNVSSASQSSSPPMTVSQV) are compositionally biased toward low complexity. Residue 390–397 (GSAGTGKS) participates in ATP binding. A DNA-binding region spans residues 840–859 (QAYVALSRAVSRAGLQVLNF).

It belongs to the helicase family. PIF1 subfamily. Monomer. Interacts with telomerase. Mg(2+) is required as a cofactor.

Its subcellular location is the nucleus. The protein localises to the mitochondrion. The enzyme catalyses Couples ATP hydrolysis with the unwinding of duplex DNA at the replication fork by translocating in the 5'-3' direction. This creates two antiparallel DNA single strands (ssDNA). The leading ssDNA polymer is the template for DNA polymerase III holoenzyme which synthesizes a continuous strand.. It carries out the reaction ATP + H2O = ADP + phosphate + H(+). Its function is as follows. DNA-dependent ATPase and 5'-3' DNA helicase required for the maintenance of both mitochondrial and nuclear genome stability. Efficiently unwinds G-quadruplex (G4) DNA structures and forked RNA-DNA hybrids. Resolves G4 structures, preventing replication pausing and double-strand breaks (DSBs) at G4 motifs. Involved in the maintenance of telomeric DNA. Inhibits telomere elongation, de novo telomere formation and telomere addition to DSBs via catalytic inhibition of telomerase. Reduces the processivity of telomerase by displacing active telomerase from DNA ends. Releases telomerase by unwinding the short telomerase RNA/telomeric DNA hybrid that is the intermediate in the telomerase reaction. Involved in the maintenance of ribosomal (rDNA). Required for efficient fork arrest at the replication fork barrier within rDNA. Involved in the maintenance of mitochondrial (mtDNA). Required to maintain mtDNA under conditions that introduce dsDNA breaks in mtDNA, either preventing or repairing dsDNA breaks. May inhibit replication progression to allow time for repair. May have a general role in chromosomal replication by affecting Okazaki fragment maturation. May have a role in conjunction with DNA2 helicase/nuclease in 5'-flap extension during Okazaki fragment processing. The polypeptide is ATP-dependent DNA helicase PIF1 (Candida albicans (strain SC5314 / ATCC MYA-2876) (Yeast)).